We begin with the raw amino-acid sequence, 442 residues long: Trigger factor (442 aa).

In terms of domain architecture, PPIase FKBP-type spans 163 to 248; sequence YDRVTINYCI…IIKIEKKQEL (86 aa).

This sequence belongs to the FKBP-type PPIase family. Tig subfamily.

Its subcellular location is the cytoplasm. It catalyses the reaction [protein]-peptidylproline (omega=180) = [protein]-peptidylproline (omega=0). Functionally, involved in protein export. Acts as a chaperone by maintaining the newly synthesized protein in an open conformation. Functions as a peptidyl-prolyl cis-trans isomerase. In Buchnera aphidicola subsp. Acyrthosiphon pisum (strain Tuc7), this protein is Trigger factor.